The chain runs to 566 residues: Macrophage colony-stimulating factor 1 (566 aa).

A signal peptide spans 1–32 (MTARGAAGRCPSSTWMGSRLLLVCLLVSRSVA). At 33 to 508 (EVSEHCSHMI…SSIQDPQTSA (476 aa)) the chain is on the extracellular side. Residues asparagine 106, asparagine 153, and asparagine 171 are each glycosylated (N-linked (GlcNAc...) asparagine). Disordered stretches follow at residues 197-417 (PSSD…KLLP) and 434-484 (GKKS…GAAR). Over residues 253 to 265 (PRSTCQTLESTEQ) the composition is skewed to polar residues. A glycan (O-linked (Xyl...) (chondroitin sulfate) serine) is linked at serine 302. The segment covering 348–360 (DQQPTNITDTPLT) has biased composition (polar residues). Asparagine 353 carries an N-linked (GlcNAc...) asparagine glycan. 2 O-linked (GalNAc...) threonine glycosylation sites follow: threonine 355 and threonine 357. The span at 377–394 (EKTDGSSTLREDQQEPRS) shows a compositional bias: basic and acidic residues. Polar residues predominate over residues 400-410 (LNPQRVGNSAT). Over residues 434–445 (GKKSTRDRRSPA) the composition is skewed to basic and acidic residues. Residues 509 to 531 (FVFWVLGIILVLLAVGGLLFYSW) form a helical membrane-spanning segment. Topologically, residues 532 to 566 (KRRSHRDPRTLDSSVGRPEGSSLAQDEDRQVELPV) are cytoplasmic. Positions 538 to 566 (DPRTLDSSVGRPEGSSLAQDEDRQVELPV) are disordered. A compositionally biased stretch (basic and acidic residues) spans 557 to 566 (DEDRQVELPV).

In terms of assembly, homodimer or heterodimer; disulfide-linked. Likely to exist in multiple forms: homodimer consisting of 2 identical 150-200 kDa proteoglycan subunits, heterodimer consisting of a 150-200 kDa proteoglycan subunit and a truncated 43 kDa subunit, and a homodimer consisting of 2 identical 43 kDa subunits. Interacts with CSF1R. N-glycosylated. In terms of processing, O-glycosylated; contains chondroitin sulfate.

It is found in the cell membrane. It localises to the secreted. The protein localises to the extracellular space. Its function is as follows. Cytokine that plays an essential role in the regulation of survival, proliferation and differentiation of hematopoietic precursor cells, especially mononuclear phagocytes, such as macrophages and monocytes. Promotes the release of pro-inflammatory chemokines, and thereby plays an important role in innate immunity and in inflammatory processes. Plays an important role in the regulation of osteoclast proliferation and differentiation, the regulation of bone resorption, and is required for normal bone development. Required for normal male and female fertility. Promotes reorganization of the actin cytoskeleton, regulates formation of membrane ruffles, cell adhesion and cell migration. Plays a role in lipoprotein clearance. This chain is Macrophage colony-stimulating factor 1 (Csf1), found in Rattus norvegicus (Rat).